Reading from the N-terminus, the 251-residue chain is MNGMSTGTLVLLRHGESEWNALNLFTGWVDVHLTDKGIAEGKRAGELLLEHNLLPDVLYTSLLRRAISTANIALDTADRHWIPVIRDWRLNERHYGALQGRNKAQVKDKYGDEQFMLWRRSYDTPPPTIEPGSEYSQDTDPRYANLDEVPLTECLKDVVVRLIPYWEDTISADLLAGKTVLITAHGNSLRALVKHLDGISDEDIAGLNIPTGIPLRYDLDENLKPLNPGGTYLDPEAAAAGAAAVANQGGK.

Residues 13-20 (RHGESEWN), 26-27 (TG), R65, 92-95 (ERHY), K103, 119-120 (RR), and 186-187 (GN) each bind substrate. The Tele-phosphohistidine intermediate role is filled by H14. Catalysis depends on E92, which acts as the Proton donor/acceptor.

Belongs to the phosphoglycerate mutase family. BPG-dependent PGAM subfamily.

It catalyses the reaction (2R)-2-phosphoglycerate = (2R)-3-phosphoglycerate. The protein operates within carbohydrate degradation; glycolysis; pyruvate from D-glyceraldehyde 3-phosphate: step 3/5. Catalyzes the interconversion of 2-phosphoglycerate and 3-phosphoglycerate. In Rhodococcus opacus (strain B4), this protein is 2,3-bisphosphoglycerate-dependent phosphoglycerate mutase.